The following is a 128-amino-acid chain: MATLTIDEIVEAIKNMSVLEVAELVKRLEEEFGVSAAAMVAAAPAAGAAAGAPAQAEEKTEFDVILKSPGKNKIQVIKVVREITGLGLKEAKELVDNAPKPIKEGVPKEEAEQIKKKLEEAGAEVELK.

It belongs to the bacterial ribosomal protein bL12 family. In terms of assembly, homodimer. Part of the ribosomal stalk of the 50S ribosomal subunit. Forms a multimeric L10(L12)X complex, where L10 forms an elongated spine to which 2 to 4 L12 dimers bind in a sequential fashion. Binds GTP-bound translation factors.

In terms of biological role, forms part of the ribosomal stalk which helps the ribosome interact with GTP-bound translation factors. Is thus essential for accurate translation. The polypeptide is Large ribosomal subunit protein bL12 (Aquifex aeolicus (strain VF5)).